We begin with the raw amino-acid sequence, 341 residues long: Terpene synthase 9 (341 aa).

Positions Asp81–Ser86 match the DDxx(x)D/E motif motif. The short motif at Asn222 to Glu230 is the NDxxSxxxD/E motif element.

It belongs to the terpene synthase family.

It carries out the reaction (2E,6E)-farnesyl diphosphate = (1S,2S,4R)-beta-elemene + diphosphate. It catalyses the reaction (2E,6E)-farnesyl diphosphate = germacrene D + diphosphate. Functionally, terpene synthase that converts its substrate farnesyl diphosphate (FPP) into the sesquiterpenes beta-elemene, germacrene D and a yet unidentified sesquiterpene. This chain is Terpene synthase 9, found in Dictyostelium purpureum (Slime mold).